A 217-amino-acid polypeptide reads, in one-letter code: MNTYNDNPKQCLKKIVESASAKFNESVDIAVNLGVDSRKSEEQVRGTVVLPKGIGKNIKVAVFAQDKHLLEAEKAGADIAGGEDLVEEIKKGRKLDVDWCITTPDFMAKITPIAKVLGVKGLMPNPKFGTVTSNIAEAIKTIKSGQVKFGTDKNGVIHGKLGNIKFDIDDLLENLKAFLKVIKDNKPISAKGIYFKGVFLNSTMGKAYKIGKVEDII.

This sequence belongs to the universal ribosomal protein uL1 family. As to quaternary structure, part of the 50S ribosomal subunit.

In terms of biological role, binds directly to 23S rRNA. The L1 stalk is quite mobile in the ribosome, and is involved in E site tRNA release. Its function is as follows. Protein L1 is also a translational repressor protein, it controls the translation of the L11 operon by binding to its mRNA. In Wolbachia pipientis wMel, this protein is Large ribosomal subunit protein uL1.